The sequence spans 385 residues: Zinc finger protein B385R (385 aa).

C2H2-type zinc fingers lie at residues 166–190 and 168–190; these read LQCPNCGCIQELMGTIFDETHFYNH and CPNCGCIQELMGTIFDETHFYNH.

Belongs to the asfivirus B385R family.

In African swine fever virus (isolate Tick/Malawi/Lil 20-1/1983) (ASFV), this protein is Zinc finger protein B385R.